A 252-amino-acid polypeptide reads, in one-letter code: 3-dehydroquinate dehydratase (252 aa).

Residues S21, 46 to 48 (EWR), and R82 each bind 3-dehydroquinate. H143 functions as the Proton donor/acceptor in the catalytic mechanism. The active-site Schiff-base intermediate with substrate is the K170. 3-dehydroquinate contacts are provided by R213, S232, and Q236.

It belongs to the type-I 3-dehydroquinase family. Homodimer.

It catalyses the reaction 3-dehydroquinate = 3-dehydroshikimate + H2O. Its pathway is metabolic intermediate biosynthesis; chorismate biosynthesis; chorismate from D-erythrose 4-phosphate and phosphoenolpyruvate: step 3/7. Involved in the third step of the chorismate pathway, which leads to the biosynthesis of aromatic amino acids. Catalyzes the cis-dehydration of 3-dehydroquinate (DHQ) and introduces the first double bond of the aromatic ring to yield 3-dehydroshikimate. The sequence is that of 3-dehydroquinate dehydratase from Shigella sonnei (strain Ss046).